A 387-amino-acid polypeptide reads, in one-letter code: Cysteine desulfurase (387 aa).

Pyridoxal 5'-phosphate is bound by residues 72 to 73, N152, Q180, and 200 to 202; these read GT and SAH. K203 is subject to N6-(pyridoxal phosphate)lysine. T238 lines the pyridoxal 5'-phosphate pocket. C326 (cysteine persulfide intermediate) is an active-site residue. C326 is a binding site for [2Fe-2S] cluster.

It belongs to the class-V pyridoxal-phosphate-dependent aminotransferase family. NifS/IscS subfamily. As to quaternary structure, homodimer. Requires pyridoxal 5'-phosphate as cofactor.

The catalysed reaction is (sulfur carrier)-H + L-cysteine = (sulfur carrier)-SH + L-alanine. Catalyzes the removal of elemental sulfur atoms from cysteine to produce alanine. Seems to participate in the biosynthesis of the nitrogenase metalloclusters by providing the inorganic sulfur required for the Fe-S core formation. The protein is Cysteine desulfurase of Sinorhizobium fredii (strain NBRC 101917 / NGR234).